Reading from the N-terminus, the 200-residue chain is Probable molybdenum cofactor guanylyltransferase (200 aa).

GTP is bound by residues 9 to 11 (LAG), Lys-21, Asp-69, and Asp-100. Position 100 (Asp-100) interacts with Mg(2+).

Belongs to the MobA family. Mg(2+) serves as cofactor.

It localises to the cytoplasm. The catalysed reaction is Mo-molybdopterin + GTP + H(+) = Mo-molybdopterin guanine dinucleotide + diphosphate. Its function is as follows. Transfers a GMP moiety from GTP to Mo-molybdopterin (Mo-MPT) cofactor (Moco or molybdenum cofactor) to form Mo-molybdopterin guanine dinucleotide (Mo-MGD) cofactor. This Bacillus mycoides (strain KBAB4) (Bacillus weihenstephanensis) protein is Probable molybdenum cofactor guanylyltransferase.